The chain runs to 377 residues: Malate dehydrogenase, cytoplasmic (377 aa).

Positions 2–5 match the Pro/N-degron motif; it reads PHSV. Residue T6 is modified to Phosphothreonine. NAD(+) contacts are provided by residues 20–26 and D57; that span reads GAAGGIG. Positions 106 and 112 each coordinate substrate. Residues N119 and 144–146 contribute to the NAD(+) site; that span reads ISN. Substrate-binding residues include N146 and R185. H215 acts as the Proton acceptor in catalysis. M266 is a binding site for NAD(+).

This sequence belongs to the LDH/MDH superfamily. MDH type 1 family. Homodimer. In terms of processing, targeted for proteasomal degradation when cells are shifted to glucose-containing growth medium.

The protein resides in the cytoplasm. The catalysed reaction is (S)-malate + NAD(+) = oxaloacetate + NADH + H(+). The isoenzyme MDH2 may function primarily in the glyoxylate cycle. This chain is Malate dehydrogenase, cytoplasmic (MDH2), found in Saccharomyces cerevisiae (strain ATCC 204508 / S288c) (Baker's yeast).